Consider the following 736-residue polypeptide: 1,4-alpha-glucan branching enzyme GlgB (736 aa).

D415 acts as the Nucleophile in catalysis. E470 serves as the catalytic Proton donor.

Belongs to the glycosyl hydrolase 13 family. GlgB subfamily. As to quaternary structure, monomer.

The catalysed reaction is Transfers a segment of a (1-&gt;4)-alpha-D-glucan chain to a primary hydroxy group in a similar glucan chain.. The protein operates within glycan biosynthesis; glycogen biosynthesis. Functionally, catalyzes the formation of the alpha-1,6-glucosidic linkages in glycogen by scission of a 1,4-alpha-linked oligosaccharide from growing alpha-1,4-glucan chains and the subsequent attachment of the oligosaccharide to the alpha-1,6 position. In Paraburkholderia xenovorans (strain LB400), this protein is 1,4-alpha-glucan branching enzyme GlgB.